The primary structure comprises 73 residues: Kappa-scoloptoxin(03)-Ssm1c (73 aa).

The N-terminal stretch at 1-23 (MKSWMAILLVMALIIFTLDNCYS) is a signal peptide. 3 disulfide bridges follow: C32-C58, C41-C57, and C44-C67.

This sequence belongs to the scoloptoxin family. In terms of tissue distribution, expressed by the venom gland.

The protein resides in the secreted. Its function is as follows. Inhibits voltage-gated potassium channels. The polypeptide is Kappa-scoloptoxin(03)-Ssm1c (Scolopendra mutilans (Chinese red-headed centipede)).